The primary structure comprises 272 residues: ATP synthase subunit a (272 aa).

The next 6 helical transmembrane spans lie at 41–61, 110–130, 143–165, 188–208, 222–242, and 243–263; these read VLNI…LSIF, FVWV…FPFI, VPSA…ILFY, VFFI…PISL, IFIL…NVPW, and AIFH…LTIV.

Belongs to the ATPase A chain family. In terms of assembly, F-type ATPases have 2 components, CF(1) - the catalytic core - and CF(0) - the membrane proton channel. CF(1) has five subunits: alpha(3), beta(3), gamma(1), delta(1), epsilon(1). CF(0) has three main subunits: a(1), b(2) and c(9-12). The alpha and beta chains form an alternating ring which encloses part of the gamma chain. CF(1) is attached to CF(0) by a central stalk formed by the gamma and epsilon chains, while a peripheral stalk is formed by the delta and b chains.

Its subcellular location is the cell membrane. Functionally, key component of the proton channel; it plays a direct role in the translocation of protons across the membrane. In Buchnera aphidicola subsp. Schizaphis graminum (strain Sg), this protein is ATP synthase subunit a.